Consider the following 65-residue polypeptide: Small ribosomal subunit protein bS21 (65 aa).

This sequence belongs to the bacterial ribosomal protein bS21 family.

The protein is Small ribosomal subunit protein bS21 of Chlorobaculum parvum (strain DSM 263 / NCIMB 8327) (Chlorobium vibrioforme subsp. thiosulfatophilum).